Here is a 234-residue protein sequence, read N- to C-terminus: Glucosamine-6-phosphate deaminase (234 aa).

Asp62 acts as the Proton acceptor; for enolization step in catalysis. Asn128 serves as the catalytic For ring-opening step. His130 functions as the Proton acceptor; for ring-opening step in the catalytic mechanism. Glu135 acts as the For ring-opening step in catalysis.

It belongs to the glucosamine/galactosamine-6-phosphate isomerase family. NagB subfamily.

It catalyses the reaction alpha-D-glucosamine 6-phosphate + H2O = beta-D-fructose 6-phosphate + NH4(+). Its pathway is amino-sugar metabolism; N-acetylneuraminate degradation; D-fructose 6-phosphate from N-acetylneuraminate: step 5/5. Functionally, catalyzes the reversible isomerization-deamination of glucosamine 6-phosphate (GlcN6P) to form fructose 6-phosphate (Fru6P) and ammonium ion. In Streptococcus equi subsp. equi (strain 4047), this protein is Glucosamine-6-phosphate deaminase.